A 76-amino-acid polypeptide reads, in one-letter code: SCIDIGGDCDGEKDDCQCCRRNGYCSCYSLFGYLKSGCKCVVGTSAEFQGICRRKARQCYNSDPDKCESHNKPKRR.

6 cysteine pairs are disulfide-bonded: Cys2–Cys19, Cys9–Cys25, Cys16–Cys52, Cys18–Cys40, Cys27–Cys38, and Cys59–Cys67.

Belongs to the neurotoxin 04 (omega-agtx) family. 03 (type II/III omega-agtx) subfamily. Expressed by the venom gland.

Its subcellular location is the secreted. Its function is as follows. Omega-agatoxin are antagonist of voltage-gated calcium channels. They block insect neuromuscular transmission presynaptically. Potent blocker of N- (Cav2.2/CACNA1B) and L-type (Cav1/CACNA1) calcium channels. The chain is Omega-agatoxin-Aa3a from Agelenopsis aperta (North American funnel-web spider).